We begin with the raw amino-acid sequence, 159 residues long: Large ribosomal subunit protein uL11 (159 aa).

The protein belongs to the universal ribosomal protein uL11 family. As to quaternary structure, part of the ribosomal stalk of the 50S ribosomal subunit. Interacts with L10 and the large rRNA to form the base of the stalk. L10 forms an elongated spine to which L12 dimers bind in a sequential fashion forming a multimeric L10(L12)X complex.

In terms of biological role, forms part of the ribosomal stalk which helps the ribosome interact with GTP-bound translation factors. This chain is Large ribosomal subunit protein uL11, found in Nitrosopumilus maritimus (strain SCM1).